The chain runs to 302 residues: 33 kDa chaperonin (302 aa).

Cystine bridges form between C255–C257 and C288–C291.

It belongs to the HSP33 family. Post-translationally, under oxidizing conditions two disulfide bonds are formed involving the reactive cysteines. Under reducing conditions zinc is bound to the reactive cysteines and the protein is inactive.

It is found in the cytoplasm. In terms of biological role, redox regulated molecular chaperone. Protects both thermally unfolding and oxidatively damaged proteins from irreversible aggregation. Plays an important role in the bacterial defense system toward oxidative stress. This Caulobacter vibrioides (strain ATCC 19089 / CIP 103742 / CB 15) (Caulobacter crescentus) protein is 33 kDa chaperonin.